A 212-amino-acid polypeptide reads, in one-letter code: Methylthioribulose-1-phosphate dehydratase (212 aa).

Residues His97 and His99 each contribute to the Zn(2+) site.

It belongs to the aldolase class II family. MtnB subfamily. As to quaternary structure, homotetramer. It depends on Zn(2+) as a cofactor.

It carries out the reaction 5-(methylsulfanyl)-D-ribulose 1-phosphate = 5-methylsulfanyl-2,3-dioxopentyl phosphate + H2O. Its pathway is amino-acid biosynthesis; L-methionine biosynthesis via salvage pathway; L-methionine from S-methyl-5-thio-alpha-D-ribose 1-phosphate: step 2/6. In terms of biological role, catalyzes the dehydration of methylthioribulose-1-phosphate (MTRu-1-P) into 2,3-diketo-5-methylthiopentyl-1-phosphate (DK-MTP-1-P). The polypeptide is Methylthioribulose-1-phosphate dehydratase (Bacillus cytotoxicus (strain DSM 22905 / CIP 110041 / 391-98 / NVH 391-98)).